The primary structure comprises 388 residues: Succinate--CoA ligase [ADP-forming] subunit beta (388 aa).

The ATP-grasp domain maps to lysine 9–lysine 245. ATP is bound by residues lysine 46, glycine 53–glycine 55, glutamate 100, tyrosine 103, and glutamate 108. Residues asparagine 200 and aspartate 214 each contribute to the Mg(2+) site. Residues asparagine 265 and glycine 322 to valine 324 each bind substrate.

It belongs to the succinate/malate CoA ligase beta subunit family. Heterotetramer of two alpha and two beta subunits. Requires Mg(2+) as cofactor.

It catalyses the reaction succinate + ATP + CoA = succinyl-CoA + ADP + phosphate. The catalysed reaction is GTP + succinate + CoA = succinyl-CoA + GDP + phosphate. Its pathway is carbohydrate metabolism; tricarboxylic acid cycle; succinate from succinyl-CoA (ligase route): step 1/1. Succinyl-CoA synthetase functions in the citric acid cycle (TCA), coupling the hydrolysis of succinyl-CoA to the synthesis of either ATP or GTP and thus represents the only step of substrate-level phosphorylation in the TCA. The beta subunit provides nucleotide specificity of the enzyme and binds the substrate succinate, while the binding sites for coenzyme A and phosphate are found in the alpha subunit. The sequence is that of Succinate--CoA ligase [ADP-forming] subunit beta from Neisseria meningitidis serogroup C (strain 053442).